The chain runs to 448 residues: MTTHKHRRTEKNLCFKQYYKWILCFILTLYFFASFFVDHDQDHRSSTSISKHLLTNHKPKLFASRAMFESKIHDHKLGFTSQQPNIKTDVFNNLKIYVYDLPSKFNKDWLANDRCTNHLFAAEVALHKAFLSLEGDVRTEDPYEADFFFVPVYVSCNFSTINGFPAIGHARSLINDAIKLVSTQYPFWNRTSGSDHVFTATHDFGSCFHTMEDRAIADGVPIFLRNSIILQTFGVTFNHPCQEVENVVIPPYISPESLHKTQKNIPVTKERDIWVFFRGKMELHPKNISGRFYSKRVRTNIWRSYGGDRRFYLQRQRFAGYQSEIARSVFCLCPLGWAPWSPRLVESVALGCVPVIIADGIRLPFPSTVRWPDISLTVAERDVGKLGDILEHVAATNLSVIQRNLEDPSVRRALMFNVPSREGDATWQVLEALSKKLNRSVRRSNSFL.

Topologically, residues 1-16 (MTTHKHRRTEKNLCFK) are cytoplasmic. Residues 17 to 37 (QYYKWILCFILTLYFFASFFV) form a helical; Signal-anchor for type II membrane protein membrane-spanning segment. The Lumenal segment spans residues 38-448 (DHDQDHRSST…RSVRRSNSFL (411 aa)). 5 N-linked (GlcNAc...) asparagine glycosylation sites follow: Asn-157, Asn-189, Asn-287, Asn-397, and Asn-438.

It belongs to the glycosyltransferase 47 family. Expressed in developing interfascicular fibers and xylem cells in stems and developing secondary xylem in roots.

The protein localises to the golgi apparatus membrane. Its function is as follows. Involved in the synthesis of the hemicellulose glucuronoxylan, a major component of secondary cell walls. Probably involved in the synthesis of the glycosyl sequence at the glucuronoxylan reducing end. In Arabidopsis thaliana (Mouse-ear cress), this protein is Probable glucuronoxylan glucuronosyltransferase IRX7 (IRX7).